A 427-amino-acid polypeptide reads, in one-letter code: 3-phosphoshikimate 1-carboxyvinyltransferase (427 aa).

K22, S23, and R27 together coordinate 3-phosphoshikimate. K22 is a binding site for phosphoenolpyruvate. The phosphoenolpyruvate site is built by G96 and R124. 7 residues coordinate 3-phosphoshikimate: S169, S170, Q171, S197, D313, N336, and K340. Residue Q171 participates in phosphoenolpyruvate binding. The Proton acceptor role is filled by D313. Phosphoenolpyruvate-binding residues include R344, R386, and K411.

It belongs to the EPSP synthase family. As to quaternary structure, monomer.

Its subcellular location is the cytoplasm. The catalysed reaction is 3-phosphoshikimate + phosphoenolpyruvate = 5-O-(1-carboxyvinyl)-3-phosphoshikimate + phosphate. Its pathway is metabolic intermediate biosynthesis; chorismate biosynthesis; chorismate from D-erythrose 4-phosphate and phosphoenolpyruvate: step 6/7. Functionally, catalyzes the transfer of the enolpyruvyl moiety of phosphoenolpyruvate (PEP) to the 5-hydroxyl of shikimate-3-phosphate (S3P) to produce enolpyruvyl shikimate-3-phosphate and inorganic phosphate. The protein is 3-phosphoshikimate 1-carboxyvinyltransferase of Klebsiella pneumoniae (strain 342).